A 413-amino-acid polypeptide reads, in one-letter code: Protein MANNAN SYNTHESIS-RELATED (413 aa).

Residues 1–5 (MNSME) lie on the Cytoplasmic side of the membrane. The chain crosses the membrane as a helical; Signal-anchor for type II membrane protein span at residues 6-26 (IRQAFAGLLTLSMFIMLGNMI). Over 27-413 (KKDHFDYPAE…KNHLAYKCFC (387 aa)) the chain is Lumenal. Asn207 is a glycosylation site (N-linked (GlcNAc...) asparagine). A substrate-binding site is contributed by 255–257 (DLR).

It belongs to the glycosyltransferase GT106 family. As to expression, highly and specifically expressed in the endosperm.

It localises to the golgi apparatus membrane. It functions in the pathway glycan biosynthesis. Its function is as follows. Glycosyltransferase involved in mannan biosynthesis. This is Protein MANNAN SYNTHESIS-RELATED from Trigonella foenum-graecum (Fenugreek).